The chain runs to 260 residues: Indole-3-glycerol phosphate synthase (260 aa).

The protein belongs to the TrpC family.

The catalysed reaction is 1-(2-carboxyphenylamino)-1-deoxy-D-ribulose 5-phosphate + H(+) = (1S,2R)-1-C-(indol-3-yl)glycerol 3-phosphate + CO2 + H2O. It participates in amino-acid biosynthesis; L-tryptophan biosynthesis; L-tryptophan from chorismate: step 4/5. This Neisseria gonorrhoeae (strain NCCP11945) protein is Indole-3-glycerol phosphate synthase.